The chain runs to 314 residues: Homoserine O-succinyltransferase (314 aa).

Residue cysteine 142 is the Acyl-thioester intermediate of the active site. Positions 163 and 192 each coordinate substrate. Histidine 235 acts as the Proton acceptor in catalysis. Glutamate 237 is an active-site residue. Residue arginine 249 participates in substrate binding.

Belongs to the MetA family.

It localises to the cytoplasm. The catalysed reaction is L-homoserine + succinyl-CoA = O-succinyl-L-homoserine + CoA. Its pathway is amino-acid biosynthesis; L-methionine biosynthesis via de novo pathway; O-succinyl-L-homoserine from L-homoserine: step 1/1. Transfers a succinyl group from succinyl-CoA to L-homoserine, forming succinyl-L-homoserine. This chain is Homoserine O-succinyltransferase, found in Shewanella sediminis (strain HAW-EB3).